A 425-amino-acid chain; its full sequence is Adenylosuccinate synthetase (425 aa).

GTP is bound by residues 12–18 and 40–42; these read GDEGKGK and GHT. Residue Asp13 is the Proton acceptor of the active site. Asp13 and Gly40 together coordinate Mg(2+). Residues 13–16, 38–41, Thr130, Arg144, Gln224, Thr239, and Arg301 contribute to the IMP site; these read DEGK and NAGH. His41 acts as the Proton donor in catalysis. 297-303 contacts substrate; the sequence is TVSNRRR. Residues Arg303, 329–331, and 411–413 contribute to the GTP site; these read KLD and STS.

Belongs to the adenylosuccinate synthetase family. In terms of assembly, homodimer. Mg(2+) serves as cofactor.

It localises to the cytoplasm. The enzyme catalyses IMP + L-aspartate + GTP = N(6)-(1,2-dicarboxyethyl)-AMP + GDP + phosphate + 2 H(+). Its pathway is purine metabolism; AMP biosynthesis via de novo pathway; AMP from IMP: step 1/2. Its function is as follows. Plays an important role in the de novo pathway of purine nucleotide biosynthesis. Catalyzes the first committed step in the biosynthesis of AMP from IMP. The chain is Adenylosuccinate synthetase from Wolbachia sp. subsp. Drosophila simulans (strain wRi).